The following is a 344-amino-acid chain: GDSL esterase/lipase At2g19010 (344 aa).

A signal peptide spans 1-21 (MSKACWLVAAIIFTAATVVYG). The Nucleophile role is filled by serine 33. Residue asparagine 303 is glycosylated (N-linked (GlcNAc...) asparagine). Catalysis depends on residues aspartate 311 and histidine 314.

Belongs to the 'GDSL' lipolytic enzyme family.

The protein resides in the secreted. In Arabidopsis thaliana (Mouse-ear cress), this protein is GDSL esterase/lipase At2g19010.